Here is a 600-residue protein sequence, read N- to C-terminus: DDB1- and CUL4-associated factor 15 (600 aa).

Positions 1 to 29 (MAPSSKSERNSGAGSAGGGPGGTGGKRAV) are disordered. The segment covering 14 to 27 (GSAGGGPGGTGGKR) has biased composition (gly residues). Serine 50 is modified (phosphoserine). Residues cysteine 193, cysteine 196, cysteine 211, and histidine 214 each coordinate Zn(2+). At serine 314 the chain carries Phosphoserine. Residues 334–343 (AKGSPLEETR) show a composition bias toward basic and acidic residues. The disordered stretch occupies residues 334–384 (AKGSPLEETRLPSSLGPSSSRCRPSLEPQAPSGEVVPRDSPPAAETTAPEP). Low complexity-rich tracts occupy residues 344-359 (LPSSLGPSSSRCRPSL) and 374-384 (PPAAETTAPEP).

As to quaternary structure, component of the DCX(DCAF15) complex, also named CLR4(DCAF15) complex, composed of DCAF15, DDB1, cullin-4 (CUL4A or CUL4B), DDA1 and RBX1.

It functions in the pathway protein modification; protein ubiquitination. In terms of biological role, substrate-recognition component of the DCX(DCAF15) complex, a cullin-4-RING E3 ubiquitin-protein ligase complex that mediates ubiquitination and degradation of target proteins. The DCX(DCAF15) complex acts as a regulator of the natural killer (NK) cells effector functions, possibly by mediating ubiquitination and degradation of cohesin subunits SMC1A and SMC3. May play a role in the activation of antigen-presenting cells (APC) and their interaction with NK cells. This is DDB1- and CUL4-associated factor 15 from Mus musculus (Mouse).